A 308-amino-acid polypeptide reads, in one-letter code: ATP synthase gamma chain (308 aa).

The protein belongs to the ATPase gamma chain family. F-type ATPases have 2 components, CF(1) - the catalytic core - and CF(0) - the membrane proton channel. CF(1) has five subunits: alpha(3), beta(3), gamma(1), delta(1), epsilon(1). CF(0) has three main subunits: a, b and c.

The protein localises to the cell membrane. Its function is as follows. Produces ATP from ADP in the presence of a proton gradient across the membrane. The gamma chain is believed to be important in regulating ATPase activity and the flow of protons through the CF(0) complex. This is ATP synthase gamma chain from Lacticaseibacillus paracasei (strain ATCC 334 / BCRC 17002 / CCUG 31169 / CIP 107868 / KCTC 3260 / NRRL B-441) (Lactobacillus paracasei).